The primary structure comprises 414 residues: HERV-H LTR-associating protein 2 (414 aa).

The first 22 residues, 1–22 (MKAQTALSFFLILITSLSGSQG), serve as a signal peptide directing secretion. In terms of domain architecture, Ig-like V-type 1 spans 61 to 131 (IHWKYQDSYK…YVGTAIQVIT (71 aa)). N-linked (GlcNAc...) asparagine glycosylation is found at asparagine 90 and asparagine 103. One can recognise an Ig-like C1-type domain in the interval 138–222 (VGVFLTPVMK…ENSLLKQTWT (85 aa)). Cystine bridges form between cysteine 159/cysteine 210 and cysteine 243/cysteine 317. The 94-residue stretch at 235–328 (QSEHVSLSCQ…ISSDEYTLLT (94 aa)) folds into the Ig-like V-type 2 domain. A glycan (N-linked (GlcNAc...) asparagine) is linked at asparagine 318. The chain crosses the membrane as a helical span at residues 345-365 (KGLWILVPSAILAAFLLIWSV). A disordered region spans residues 383–414 (GAQQERCCVPPGERCPSAPDNGEENVPLSGKV).

In terms of assembly, interacts with TMIGD2. Expressed at high levels in colon, kidney, testis, lung and pancreas, and at lower levels in small intestine, liver and skeletal muscle. In immune cells, highly expressed in B-cells, dendritic cells and macrophages. Not detected in T-cells.

Its subcellular location is the membrane. Its function is as follows. Through interaction with TMIGD2, costimulates T-cells in the context of TCR-mediated activation. Enhances T-cell proliferation and cytokine production via an AKT-dependent signaling cascade. This is HERV-H LTR-associating protein 2 (HHLA2) from Homo sapiens (Human).